Here is an 858-residue protein sequence, read N- to C-terminus: Elongation factor 2 (858 aa).

Residues 17–362 (ANIRNMSVIA…MITIHLPSPV (346 aa)) enclose the tr-type G domain. GTP contacts are provided by residues 26 to 33 (AHVDHGKS), 158 to 161 (NKMD), and 216 to 218 (SGL). Position 715 is a diphthamide (H715).

The protein belongs to the TRAFAC class translation factor GTPase superfamily. Classic translation factor GTPase family. EF-G/EF-2 subfamily. In terms of assembly, binds to 80S ribosomes. Actively translating ribosomes show mutually exclusive binding of eIF5a (EIF5A or EIF5A2) and EEF2/eEF2. Interacts with serbp1; interaction sequesters eef2/eEF2 at the A-site of the ribosome, thereby blocking the interaction sites of the mRNA-tRNA complex, promoting ribosome stabilization and hibernation. Interacts with habp4; interaction takes place at the A-site of hibernating ribosomes and promotes ribosome stabilization.

It is found in the cytoplasm. The protein localises to the nucleus. It catalyses the reaction GTP + H2O = GDP + phosphate + H(+). Functionally, catalyzes the GTP-dependent ribosomal translocation step during translation elongation. During this step, the ribosome changes from the pre-translocational (PRE) to the post-translocational (POST) state as the newly formed A-site-bound peptidyl-tRNA and P-site-bound deacylated tRNA move to the P and E sites, respectively. Catalyzes the coordinated movement of the two tRNA molecules, the mRNA and conformational changes in the ribosome. This Xenopus laevis (African clawed frog) protein is Elongation factor 2.